Consider the following 813-residue polypeptide: Ankyrin repeat domain-containing protein SOWAHB (813 aa).

Disordered stretches follow at residues 142 to 256 (SAAP…QSLS) and 400 to 436 (ETCGSEESDSGEGGDCDTEPRDNDDADDDTFSSDSHK). Residues 158-176 (MSEKARVNPSHWDTKRYYP) show a composition bias toward basic and acidic residues. The span at 177–189 (EDPPVPDSLPVSP) shows a compositional bias: pro residues. A compositionally biased stretch (polar residues) spans 191–202 (CTNTRQSSFTST). Positions 208-244 (HSLSSNNLSSSFSSPESPGLVAKPYNASPSPAGSSPN) are enriched in low complexity. The segment covering 245 to 256 (IREQTPKSQSLS) has biased composition (polar residues). A compositionally biased stretch (acidic residues) spans 400–416 (ETCGSEESDSGEGGDCD). 2 ANK repeats span residues 657–686 (TGYTALHWFAKHGCIDLFNKVVIGAKKAGI) and 696–726 (NGYTPLHIAAIHGHHKVAIMLVEKLKVNVKV).

It belongs to the SOWAH family.

The polypeptide is Ankyrin repeat domain-containing protein SOWAHB (sowahb) (Xenopus laevis (African clawed frog)).